The sequence spans 701 residues: CRS2-associated factor 1, chloroplastic (701 aa).

A chloroplast-targeting transit peptide spans 1–77 (MATSHLTSRS…ENGEPAAGVR (77 aa)). 2 consecutive CRM domains span residues 183–279 (EPLT…TRPI) and 301–397 (DGLT…LPPL). Residues 581–603 (GILLLFKQAIDSGMALVLNENEF) form a CRS2 binding region.

Interacts with CRS2 and RNA. Part of large ribonucleo-protein complexes that include group IIB introns, CRS2 and CAF1.

It localises to the plastid. The protein localises to the chloroplast stroma. In terms of biological role, required for the splicing of group IIB introns in chloroplasts. Forms splicing particles with CRS2. Interacts with RNA and confers intron specificity of the splicing particles. The protein is CRS2-associated factor 1, chloroplastic of Oryza sativa subsp. japonica (Rice).